The sequence spans 141 residues: ATP synthase epsilon chain (141 aa).

This sequence belongs to the ATPase epsilon chain family. F-type ATPases have 2 components, CF(1) - the catalytic core - and CF(0) - the membrane proton channel. CF(1) has five subunits: alpha(3), beta(3), gamma(1), delta(1), epsilon(1). CF(0) has three main subunits: a, b and c.

It is found in the cell inner membrane. Functionally, produces ATP from ADP in the presence of a proton gradient across the membrane. This chain is ATP synthase epsilon chain, found in Aromatoleum aromaticum (strain DSM 19018 / LMG 30748 / EbN1) (Azoarcus sp. (strain EbN1)).